Here is a 238-residue protein sequence, read N- to C-terminus: Serine protease SplE (238 aa).

Positions 1–36 (MNKNIIIKSIAALTILTSVTGVGTTMVEGIQQTAKA) are cleaved as a signal peptide. Active-site charge relay system residues include His-75, Asp-113, and Ser-191.

Belongs to the peptidase S1B family.

It is found in the secreted. This is Serine protease SplE (splE) from Staphylococcus aureus.